A 1830-amino-acid polypeptide reads, in one-letter code: Guanine nucleotide exchange factor SPIKE 1 (1830 aa).

Residue methionine 1 is modified to N-acetylmethionine. Positions 285-304 (NTGESASPSSPLAPSMTASS) are disordered. Over residues 289-304 (SASPSSPLAPSMTASS) the composition is skewed to low complexity. The 160-residue stretch at 463-622 (FHCLYVYPVA…NIFKLRLRLC (160 aa)) folds into the C2 DOCK-type domain. Serine 1051 carries the post-translational modification Phosphoserine. The residue at position 1079 (threonine 1079) is a Phosphothreonine. Serine 1095 is subject to Phosphoserine. A DOCKER domain is found at 1379 to 1828 (MAFAPVPDLH…LSHYIPAILS (450 aa)).

Belongs to the DOCK family. As to quaternary structure, homodimer. Component of SCAR/WAVE and ARP2/3 complexes. Interacts directly with ARAC4/ROP2, ARAC1/ROP3, ARAC5/ROP4, ARAC6/ROP5, ARAC8/ROP10, ARAC9/ROP8, SCAR1, SCAR2, SCAR3, SCAR4, ABI1, ABI2, ABI3 and ABI4. Binds to the inactive GDP-bound form of ARAC3/ROP6. As to expression, expressed ubiquitously, in roots and aerial organs.

It is found in the cytoplasm. The protein resides in the endoplasmic reticulum membrane. It localises to the nucleus. Guanine nucleotide exchange factor (GEF) for Rho and Rac. GEF proteins activate small GTPases by exchanging bound GDP for free GTP. Controls actin polymerization via the two heteromeric complexes WAVE and actin-related protein (ARP) 2/3. Involved in cytoskeletal reorganization required for cell shape (e.g. trichome and cotyledon) control and tissue development. Prevents cortical microtubules organization into parallel arrays oriented perpendicular to the axis of cell elongation to limit anisotropic cell growth during petal development, probably by triggering ARAC4/ROP2 and ARAC3/ROP6 activity. Promotes polarized growth and cell-cell adhesion in the leaf epidermis probably by promoting the formation of endoplasmic reticulum (ER) exit site (ERES) and/or trafficking between the ER and Golgi. Triggers ARAC3/ROP6 activation required for auxin-mediated inhibition of PIN2 internalization during gravitropic responses (, PubMed:22683260). The polypeptide is Guanine nucleotide exchange factor SPIKE 1 (Arabidopsis thaliana (Mouse-ear cress)).